The sequence spans 353 residues: Photosystem II protein D1 (353 aa).

The residue at position 2 (Thr-2) is an N-acetylthreonine. A Phosphothreonine modification is found at Thr-2. Helical transmembrane passes span 29 to 46, 118 to 133, and 142 to 156; these read YIGW…TATS, HFFI…EWEL, and WIAV…AATA. Position 118 (His-118) interacts with chlorophyll a. Tyr-126 contributes to the pheophytin a binding site. Residues Asp-170 and Glu-189 each contribute to the [CaMn4O5] cluster site. A helical membrane pass occupies residues 197–218; sequence FHMLGVAGVFGGSLFSAMHGSL. Residue His-198 participates in chlorophyll a binding. A quinone contacts are provided by residues His-215 and 264–265; that span reads SF. His-215 contacts Fe cation. His-272 contacts Fe cation. Residues 274–288 traverse the membrane as a helical segment; that stretch reads FLAIWPVVGIWFTAL. The [CaMn4O5] cluster site is built by His-332, Glu-333, Asp-342, and Ala-344. Residues 345–353 constitute a propeptide that is removed on maturation; the sequence is SVEAPSING.

The protein belongs to the reaction center PufL/M/PsbA/D family. PSII is composed of 1 copy each of membrane proteins PsbA, PsbB, PsbC, PsbD, PsbE, PsbF, PsbH, PsbI, PsbJ, PsbK, PsbL, PsbM, PsbT, PsbX, PsbY, PsbZ, Psb30/Ycf12, at least 3 peripheral proteins of the oxygen-evolving complex and a large number of cofactors. It forms dimeric complexes. The cofactor is The D1/D2 heterodimer binds P680, chlorophylls that are the primary electron donor of PSII, and subsequent electron acceptors. It shares a non-heme iron and each subunit binds pheophytin, quinone, additional chlorophylls, carotenoids and lipids. D1 provides most of the ligands for the Mn4-Ca-O5 cluster of the oxygen-evolving complex (OEC). There is also a Cl(-1) ion associated with D1 and D2, which is required for oxygen evolution. The PSII complex binds additional chlorophylls, carotenoids and specific lipids.. Post-translationally, tyr-161 forms a radical intermediate that is referred to as redox-active TyrZ, YZ or Y-Z. In terms of processing, C-terminally processed by CTPA; processing is essential to allow assembly of the oxygen-evolving complex and thus photosynthetic growth.

It localises to the plastid. The protein localises to the chloroplast thylakoid membrane. The enzyme catalyses 2 a plastoquinone + 4 hnu + 2 H2O = 2 a plastoquinol + O2. Functionally, photosystem II (PSII) is a light-driven water:plastoquinone oxidoreductase that uses light energy to abstract electrons from H(2)O, generating O(2) and a proton gradient subsequently used for ATP formation. It consists of a core antenna complex that captures photons, and an electron transfer chain that converts photonic excitation into a charge separation. The D1/D2 (PsbA/PsbD) reaction center heterodimer binds P680, the primary electron donor of PSII as well as several subsequent electron acceptors. This is Photosystem II protein D1 from Stigeoclonium helveticum (Green alga).